Here is a 712-residue protein sequence, read N- to C-terminus: Ribosomal RNA large subunit methyltransferase K/L (712 aa).

The region spanning 42–153 is the THUMP domain; it reads QALRIVMWSR…KGRASLSIDL (112 aa).

Belongs to the methyltransferase superfamily. RlmKL family.

The protein localises to the cytoplasm. The enzyme catalyses guanosine(2445) in 23S rRNA + S-adenosyl-L-methionine = N(2)-methylguanosine(2445) in 23S rRNA + S-adenosyl-L-homocysteine + H(+). The catalysed reaction is guanosine(2069) in 23S rRNA + S-adenosyl-L-methionine = N(2)-methylguanosine(2069) in 23S rRNA + S-adenosyl-L-homocysteine + H(+). Specifically methylates the guanine in position 2445 (m2G2445) and the guanine in position 2069 (m7G2069) of 23S rRNA. This chain is Ribosomal RNA large subunit methyltransferase K/L, found in Stenotrophomonas maltophilia (strain K279a).